Consider the following 302-residue polypeptide: MKLLMLCREPRLYSCQRLKEAAKRQGHEMDILDPNRCLLKLSQNPPHFQIFYQENSGSKPYLLPDYDAVLPRFGTTSTQMGCSVLQHFEGKGTFCLNLSQAFLNARDKWKSLQLLLKTGVPVPNSFLSGGEVQAQATIPHISSPTILKMLNGSQGIGVILAEKPQSAVSIMEAFKQTNISMLQQDFIEEAGNADIRCFVIGDQVVATMQRIGQDGEFRANCHRGGKTEKIILSDDEKQIAIRATKAIGLDVAGVDLIRSKNGLLVLEVNASPGLEMIEKTSGVDIAAEIIDYIEINAFINLR.

The region spanning 112–294 (LQLLLKTGVP…IAAEIIDYIE (183 aa)) is the ATP-grasp domain. ATP is bound by residues K148, 185–186 (DF), D194, and 218–220 (RAN). The Mg(2+) site is built by D255, E267, and N269. The Mn(2+) site is built by D255, E267, and N269.

Belongs to the RimK family. Mg(2+) serves as cofactor. Mn(2+) is required as a cofactor.

This chain is Probable alpha-L-glutamate ligase, found in Haemophilus influenzae (strain 86-028NP).